A 171-amino-acid polypeptide reads, in one-letter code: Inosine/xanthosine triphosphatase (171 aa).

8-13 (TTNPAK) serves as a coordination point for substrate. Glu-38 and Gln-68 together coordinate Mg(2+).

Belongs to the YjjX NTPase family. As to quaternary structure, homodimer. The cofactor is Mg(2+). Mn(2+) is required as a cofactor.

It carries out the reaction XTP + H2O = XDP + phosphate + H(+). The catalysed reaction is ITP + H2O = IDP + phosphate + H(+). Phosphatase that hydrolyzes non-canonical purine nucleotides such as XTP and ITP to their respective diphosphate derivatives. Probably excludes non-canonical purines from DNA/RNA precursor pool, thus preventing their incorporation into DNA/RNA and avoiding chromosomal lesions. The sequence is that of Inosine/xanthosine triphosphatase (yjjX) from Salmonella typhimurium (strain LT2 / SGSC1412 / ATCC 700720).